Reading from the N-terminus, the 252-residue chain is 3-dehydroquinate dehydratase (252 aa).

3-dehydroquinate contacts are provided by residues 46–48 and Arg-82; that span reads EWR. His-143 (proton donor/acceptor) is an active-site residue. Catalysis depends on Lys-170, which acts as the Schiff-base intermediate with substrate. 3-dehydroquinate contacts are provided by Arg-212, Ser-231, and Gln-235.

It belongs to the type-I 3-dehydroquinase family. In terms of assembly, homodimer.

The enzyme catalyses 3-dehydroquinate = 3-dehydroshikimate + H2O. Its pathway is metabolic intermediate biosynthesis; chorismate biosynthesis; chorismate from D-erythrose 4-phosphate and phosphoenolpyruvate: step 3/7. Functionally, involved in the third step of the chorismate pathway, which leads to the biosynthesis of aromatic amino acids. Catalyzes the cis-dehydration of 3-dehydroquinate (DHQ) and introduces the first double bond of the aromatic ring to yield 3-dehydroshikimate. In Listeria monocytogenes serovar 1/2a (strain ATCC BAA-679 / EGD-e), this protein is 3-dehydroquinate dehydratase.